The primary structure comprises 379 residues: Cobalt-precorrin-5B C(1)-methyltransferase (379 aa).

It belongs to the CbiD family.

The catalysed reaction is Co-precorrin-5B + S-adenosyl-L-methionine = Co-precorrin-6A + S-adenosyl-L-homocysteine. It functions in the pathway cofactor biosynthesis; adenosylcobalamin biosynthesis; cob(II)yrinate a,c-diamide from sirohydrochlorin (anaerobic route): step 6/10. Catalyzes the methylation of C-1 in cobalt-precorrin-5B to form cobalt-precorrin-6A. The chain is Cobalt-precorrin-5B C(1)-methyltransferase from Salmonella schwarzengrund (strain CVM19633).